A 156-amino-acid polypeptide reads, in one-letter code: Large ribosomal subunit protein uL15 (156 aa).

The tract at residues 25 to 48 is disordered; sequence RGIGCGKGKTSGRGHKGQKARSGV. Residues 34–43 are compositionally biased toward basic residues; sequence TSGRGHKGQK.

The protein belongs to the universal ribosomal protein uL15 family. Part of the 50S ribosomal subunit.

In terms of biological role, binds to the 23S rRNA. The chain is Large ribosomal subunit protein uL15 from Wolbachia pipientis subsp. Culex pipiens (strain wPip).